A 443-amino-acid chain; its full sequence is Mitochondrial enolase superfamily member 1 (443 aa).

Substrate-binding positions include 24–26 and tyrosine 34; that span reads GAD. Phosphoserine is present on serine 148. Lysine 220 serves as a coordination point for substrate. Catalysis depends on lysine 222, which acts as the Proton donor/acceptor. Aspartate 250 is a binding site for Mg(2+). Substrate contacts are provided by residues asparagine 252, glutamate 276, glutamate 305, 355-357, and glutamate 386; that span reads HAG. Mg(2+)-binding residues include glutamate 276 and glutamate 305. Residue histidine 355 is part of the active site.

The protein belongs to the mandelate racemase/muconate lactonizing enzyme family. ENOSF1 subfamily. It depends on Mg(2+) as a cofactor. Post-translationally, could be sumoylated.

It is found in the mitochondrion. It catalyses the reaction L-fuconate = 2-dehydro-3-deoxy-L-fuconate + H2O. Its function is as follows. Plays a role in the catabolism of L-fucose, a sugar that is part of the carbohydrates that are attached to cellular glycoproteins. Catalyzes the dehydration of L-fuconate to 2-keto-3-deoxy-L-fuconate by the abstraction of the 2-proton to generate an enediolate intermediate that is stabilized by the magnesium ion. The polypeptide is Mitochondrial enolase superfamily member 1 (ENOSF1) (Homo sapiens (Human)).